The primary structure comprises 602 residues: Elongation factor 4 (602 aa).

The tr-type G domain maps to 7–189; that stretch reads DKIRNFSIVA…AIVTRLPPPK (183 aa). Residues 19 to 24 and 136 to 139 each bind GTP; these read DHGKST and NKVD.

Belongs to the TRAFAC class translation factor GTPase superfamily. Classic translation factor GTPase family. LepA subfamily.

It is found in the cell inner membrane. It catalyses the reaction GTP + H2O = GDP + phosphate + H(+). Functionally, required for accurate and efficient protein synthesis under certain stress conditions. May act as a fidelity factor of the translation reaction, by catalyzing a one-codon backward translocation of tRNAs on improperly translocated ribosomes. Back-translocation proceeds from a post-translocation (POST) complex to a pre-translocation (PRE) complex, thus giving elongation factor G a second chance to translocate the tRNAs correctly. Binds to ribosomes in a GTP-dependent manner. The protein is Elongation factor 4 of Caulobacter vibrioides (strain NA1000 / CB15N) (Caulobacter crescentus).